Reading from the N-terminus, the 115-residue chain is MKRFRKNNLELELIRELSEIDFYNISAPLNSKEFWKEWQEKFNRANLTRIALRNILRNKRLSPKEYRKVKNSIKKYEDIINYLNALKLTALNARGSFGGYFIEFDEDEEENEGGT.

This is an uncharacterized protein from Aquifex aeolicus (strain VF5).